The primary structure comprises 384 residues: Actin-related protein 2/3 complex subunit 1 (384 aa).

WD repeat units follow at residues 61–99 (DHDKTITAVDISIHGRIVTCSQDRNAYVWEPLSDGTYKP), 105–146 (RINR…WVSK), 151–190 (PIKSTINCLSWHANGVLLAAGGTDGFMRVFSGFIKGLDSK), 212–251 (YQGSYIHDVEWRSQMERIAYVAHDGTLNVVDYQSPVQSVN), and 349–383 (AHENAIVELRPFAESNGQITQVSSCGLDGKIVIYT).

Belongs to the WD repeat ARPC1 family. As to quaternary structure, component of the Arp2/3 complex composed of ARP2, ARP3, ARC40/p41-ARC, ARC35/p34-ARC, ARC18/p21-ARC, ARC19/p20-ARC and ARC16/p16-ARC.

The protein localises to the cytoplasm. It localises to the cytoskeleton. Its subcellular location is the actin patch. Functions as a component of the Arp2/3 complex which is involved in regulation of actin polymerization and together with an activating nucleation-promoting factor (NPF) mediates the formation of branched actin networks. In Saccharomyces cerevisiae (strain ATCC 204508 / S288c) (Baker's yeast), this protein is Actin-related protein 2/3 complex subunit 1 (ARC40).